We begin with the raw amino-acid sequence, 166 residues long: Polyadenylate-binding protein 2 (166 aa).

The 78-residue stretch at 55–132 (QSVYVGNVDY…RPLKVTPKRT (78 aa)) folds into the RRM domain. The tract at residues 129 to 166 (PKRTNVPGMSRGRGRGRGRGRGRGRGGYRGRARGFAPY) is disordered. Basic residues predominate over residues 140–160 (GRGRGRGRGRGRGRGGYRGRA).

The protein localises to the nucleus. This Schizosaccharomyces pombe (strain 972 / ATCC 24843) (Fission yeast) protein is Polyadenylate-binding protein 2 (pab2).